The chain runs to 308 residues: tRNA pseudouridine synthase B (308 aa).

Residue Asp47 is the Nucleophile of the active site.

The protein belongs to the pseudouridine synthase TruB family. Type 1 subfamily.

It carries out the reaction uridine(55) in tRNA = pseudouridine(55) in tRNA. In terms of biological role, responsible for synthesis of pseudouridine from uracil-55 in the psi GC loop of transfer RNAs. This is tRNA pseudouridine synthase B from Xanthomonas axonopodis pv. citri (strain 306).